The following is a 241-amino-acid chain: Methylthioribulose-1-phosphate dehydratase (241 aa).

Positions 1–12 (MSQEITQKDNND) are enriched in basic and acidic residues. Positions 1–22 (MSQEITQKDNNDHLVQSSDPDH) are disordered. Cys101 serves as a coordination point for substrate. 2 residues coordinate Zn(2+): His118 and His120. Glu147 functions as the Proton donor/acceptor in the catalytic mechanism. Residue His203 participates in Zn(2+) binding.

The protein belongs to the aldolase class II family. MtnB subfamily. Requires Zn(2+) as cofactor.

It localises to the cytoplasm. It carries out the reaction 5-(methylsulfanyl)-D-ribulose 1-phosphate = 5-methylsulfanyl-2,3-dioxopentyl phosphate + H2O. Its pathway is amino-acid biosynthesis; L-methionine biosynthesis via salvage pathway; L-methionine from S-methyl-5-thio-alpha-D-ribose 1-phosphate: step 2/6. Its function is as follows. Catalyzes the dehydration of methylthioribulose-1-phosphate (MTRu-1-P) into 2,3-diketo-5-methylthiopentyl-1-phosphate (DK-MTP-1-P). The chain is Methylthioribulose-1-phosphate dehydratase from Aspergillus terreus (strain NIH 2624 / FGSC A1156).